The sequence spans 356 residues: Cyclin-dependent kinase 5 activator 1 (356 aa).

Disordered stretches follow at residues 1–53 and 66–99; these read MGAN…AKES and IQPV…FTRN. 2 stretches are compositionally biased toward low complexity: residues 40–49 and 71–92; these read SNTSSRSSSN and SRRS…SSDS.

It belongs to the cyclin-dependent kinase 5 activator family. In terms of assembly, heterodimer composed of a catalytic subunit cdk-5 and a regulatory subunit cdka-1. Interaction with cdka-1 is required for cdk-5 activation. Expressed in all classes of neurons in the ventral cord.

The protein localises to the cytoplasm. The protein resides in the cell projection. It is found in the dendrite. Its subcellular location is the axon. Its function is as follows. Activator of the kinase cdk-5. In several motor neurons, promotes the polarized trafficking of synaptic vesicles and dense-core vesicles. In the ventral nerve cord, regulates the synaptic localization of the glutamate receptor, glr-1. In DA motor neurons, regulates axonal transport of synaptic vesicle precursors by inhibiting dynein-mediated retrograde transport. Regulates the polarized distribution of dense-core vesicles in DB motor neurons. May regulate these processes in association with cdk-5. May also play a role in GABAergic synaptic vesicle localization in the ventral nerve cord. The sequence is that of Cyclin-dependent kinase 5 activator 1 from Caenorhabditis elegans.